Here is a 218-residue protein sequence, read N- to C-terminus: Glutathione S-transferase Mu 6 (218 aa).

The GST N-terminal domain maps to 1-88 (MPVTLGYWDI…YLGRKHNLCG (88 aa)). Glutathione is bound by residues 7 to 8 (YW), 46 to 50 (WLNDK), 59 to 60 (NL), and 72 to 73 (QS). Residues 90–208 (TEEERIRVDI…KTSRFLPSPV (119 aa)) form the GST C-terminal domain. Residue Tyr116 participates in substrate binding.

This sequence belongs to the GST superfamily. Mu family. Homodimer. Expressed in liver, stomach and small intestine. Not expressed in spleen, kidney, colon, heart, muscle, brain or lung.

The protein resides in the cytoplasm. It carries out the reaction RX + glutathione = an S-substituted glutathione + a halide anion + H(+). Functionally, conjugation of reduced glutathione to a wide number of exogenous and endogenous hydrophobic electrophiles. The sequence is that of Glutathione S-transferase Mu 6 (Gstm6) from Mus musculus (Mouse).